We begin with the raw amino-acid sequence, 250 residues long: Imidazole glycerol phosphate synthase subunit HisF (250 aa).

Active-site residues include Asp11 and Asp130.

It belongs to the HisA/HisF family. Heterodimer of HisH and HisF.

It is found in the cytoplasm. It carries out the reaction 5-[(5-phospho-1-deoxy-D-ribulos-1-ylimino)methylamino]-1-(5-phospho-beta-D-ribosyl)imidazole-4-carboxamide + L-glutamine = D-erythro-1-(imidazol-4-yl)glycerol 3-phosphate + 5-amino-1-(5-phospho-beta-D-ribosyl)imidazole-4-carboxamide + L-glutamate + H(+). It functions in the pathway amino-acid biosynthesis; L-histidine biosynthesis; L-histidine from 5-phospho-alpha-D-ribose 1-diphosphate: step 5/9. Its function is as follows. IGPS catalyzes the conversion of PRFAR and glutamine to IGP, AICAR and glutamate. The HisF subunit catalyzes the cyclization activity that produces IGP and AICAR from PRFAR using the ammonia provided by the HisH subunit. This Bacteroides fragilis (strain YCH46) protein is Imidazole glycerol phosphate synthase subunit HisF.